The primary structure comprises 236 residues: tRNA (guanine-N(7)-)-methyltransferase (236 aa).

The tract at residues 1–23 (MEADVQRAQQAQLEKGSSVPPWT) is disordered. Residues Asp69, Glu94, Asn121, and Asp144 each contribute to the S-adenosyl-L-methionine site. Residue Asp144 is part of the active site. Residues Lys148 and Asp180 each contribute to the substrate site.

The protein belongs to the class I-like SAM-binding methyltransferase superfamily. TrmB family.

The catalysed reaction is guanosine(46) in tRNA + S-adenosyl-L-methionine = N(7)-methylguanosine(46) in tRNA + S-adenosyl-L-homocysteine. It functions in the pathway tRNA modification; N(7)-methylguanine-tRNA biosynthesis. In terms of biological role, catalyzes the formation of N(7)-methylguanine at position 46 (m7G46) in tRNA. The chain is tRNA (guanine-N(7)-)-methyltransferase from Synechococcus sp. (strain JA-3-3Ab) (Cyanobacteria bacterium Yellowstone A-Prime).